The chain runs to 257 residues: Small ribosomal subunit protein uS3 (257 aa).

In terms of domain architecture, KH type-2 spans 40 to 110 (IRKYLSTKYK…LVSLKVVEVQ (71 aa)). Residues 223-257 (ANKEFSRSSKPKKGSFNRSSRSKNTKPAPKQAVSE) form a disordered region. A compositionally biased stretch (basic residues) spans 231-246 (SKPKKGSFNRSSRSKN).

The protein belongs to the universal ribosomal protein uS3 family. As to quaternary structure, part of the 30S ribosomal subunit. Forms a tight complex with proteins S10 and S14.

Its function is as follows. Binds the lower part of the 30S subunit head. Binds mRNA in the 70S ribosome, positioning it for translation. In Ureaplasma parvum serovar 3 (strain ATCC 27815 / 27 / NCTC 11736), this protein is Small ribosomal subunit protein uS3.